The following is a 622-amino-acid chain: Chaperone protein HscA homolog (622 aa).

This sequence belongs to the heat shock protein 70 family.

Functionally, chaperone involved in the maturation of iron-sulfur cluster-containing proteins. Has a low intrinsic ATPase activity which is markedly stimulated by HscB. In Acidovorax sp. (strain JS42), this protein is Chaperone protein HscA homolog.